The sequence spans 866 residues: Fibrinogen alpha chain (866 aa).

The signal sequence occupies residues methionine 1–threonine 19. Serine 22 is subject to Phosphoserine. An alpha-chain polymerization, binding distal domain of another fibrin gamma chain region spans residues glycine 36 to arginine 38. Residue serine 45 is modified to Phosphoserine; by FAM20C. Serine 50 is subject to Phosphoserine. A Phosphoserine; by FAM20C modification is found at serine 56. Residues cysteine 68–aspartate 631 are a coiled coil. The tract at residues glutamate 262 to serine 460 is disordered. Residues threonine 270–serine 299 are compositionally biased toward low complexity. Residues serine 281, serine 291, and serine 294 each carry the phosphoserine modification. Threonine 320 carries O-linked (GalNAc...) threonine glycosylation. Lysine 322 participates in a covalent cross-link: Isoglutamyl lysine isopeptide (Lys-Gln) (interchain with Q-41 in alpha-2-antiplasmin). Glutamine 347 participates in a covalent cross-link: Isoglutamyl lysine isopeptide (Gln-Lys) (interchain with K-?). O-linked (GalNAc...) serine glycosylation is present at serine 351. The span at proline 354–glycine 391 shows a compositional bias: polar residues. The residue at position 364 (serine 364) is a Phosphoserine; by FAM20C. Residue glutamine 385 forms an Isoglutamyl lysine isopeptide (Gln-Lys) (interchain with K-?) linkage. Threonine 412 is modified (phosphothreonine). The segment covering threonine 424–valine 449 has biased composition (basic and acidic residues). Residues threonine 450–serine 460 show a composition bias toward low complexity. The residue at position 451 (serine 451) is a Phosphoserine. N-linked (GlcNAc...) asparagine; in variant Caracas-2 glycosylation is present at serine 453. Residues cysteine 461 and cysteine 491 are joined by a disulfide bond. Serine 501 carries the phosphoserine modification. Threonine 505 bears the Phosphothreonine mark. Serine 524 bears the Phosphoserine; by FAM20C mark. Residues lysine 527 and lysine 558 each participate in an isoglutamyl lysine isopeptide (Lys-Gln) (interchain with Q-?) cross-link. The disordered stretch occupies residues glutamate 543–threonine 638. The residue at position 560 (serine 560) is a Phosphoserine; by FAM20C. Proline 565 carries the post-translational modification 4-hydroxyproline; by P4HA1. Residues lysine 575, lysine 581, and lysine 599 each participate in an isoglutamyl lysine isopeptide (Lys-Gln) (interchain with Q-?) cross-link. The span at lysine 575–tyrosine 589 shows a compositional bias: low complexity. Basic and acidic residues predominate over residues serine 594–histidine 617. Serine 609 carries the phosphoserine; by FAM20C modification. Residues serine 618 to arginine 627 are compositionally biased toward basic residues. The Fibrinogen C-terminal domain maps to histidine 623–valine 864. Residue asparagine 686 is glycosylated (N-linked (GlcNAc...) asparagine). Residues aspartate 791, aspartate 793, tryptophan 795, and glutamate 797 each contribute to the Ca(2+) site. An intrachain disulfide couples cysteine 799 to cysteine 812.

In terms of assembly, heterohexamer; disulfide linked. Contains 2 sets of 3 non-identical chains (alpha, beta and gamma). The 2 heterotrimers are in head to head conformation with the N-termini in a small central domain. (Microbial infection) Interacts with Staphylococcus aureus protein Fib; this interaction inhibits fibrinogen-dependent platelet aggregation and protects the bacteria form phagocytosis. The alpha chain is normally not N-glycosylated, even though glycosylation at Asn-686 was observed when a fragment of the protein was expressed in insect cells. It is well known that heterologous expression of isolated domains can lead to adventitious protein modifications. Besides, glycosylation at Asn-686 is supported by large-scale glycoproteomics studies, but the evidence is still quite tenuous. Most likely, Asn-686 is not glycosylated in the healthy human body, or only with low efficiency. Post-translationally, O-glycosylated. In terms of processing, forms F13A-mediated cross-links between a glutamine and the epsilon-amino group of a lysine residue, forming fibronectin-fibrinogen heteropolymers. About one-third of the alpha chains in the molecules in blood were found to be phosphorylated. Post-translationally, conversion of fibrinogen to fibrin is triggered by thrombin, which cleaves fibrinopeptides A and B from alpha and beta chains, and thus exposes the N-terminal polymerization sites responsible for the formation of the soft clot. The soft clot is converted into the hard clot by factor XIIIA which catalyzes the epsilon-(gamma-glutamyl)lysine cross-linking between gamma chains (stronger) and between alpha chains (weaker) of different monomers. In terms of processing, phosphorylated by FAM20C in the extracellular medium. In terms of tissue distribution, detected in blood plasma (at protein level).

It is found in the secreted. Its function is as follows. Cleaved by the protease thrombin to yield monomers which, together with fibrinogen beta (FGB) and fibrinogen gamma (FGG), polymerize to form an insoluble fibrin matrix. Fibrin has a major function in hemostasis as one of the primary components of blood clots. In addition, functions during the early stages of wound repair to stabilize the lesion and guide cell migration during re-epithelialization. Was originally thought to be essential for platelet aggregation, based on in vitro studies using anticoagulated blood. However, subsequent studies have shown that it is not absolutely required for thrombus formation in vivo. Enhances expression of SELP in activated platelets via an ITGB3-dependent pathway. Maternal fibrinogen is essential for successful pregnancy. Fibrin deposition is also associated with infection, where it protects against IFNG-mediated hemorrhage. May also facilitate the immune response via both innate and T-cell mediated pathways. The chain is Fibrinogen alpha chain (FGA) from Homo sapiens (Human).